Reading from the N-terminus, the 511-residue chain is MDPLQTAHAGPRKKRPRQTGASMASTPQDVRFQDLVLFILEKKMGSTRRTFLTELARRKGFRVENEFSDSVTHIVAENNSGSDVLEWLQVQKIKASSQLEVLDVSWLIECMRTGKPVETTGKHQLVARSDCSASPNPGPQKTPPLAVQKISQYACQRRTTLNNCNHVFTDAFEILAENYEFKENEGCAVTFLRAASVLKSLPFTIITMRDTEGIPCLEDKVKCIIEEIIEDGESSEVKAVLNDERYQSFKLFTSVFGVGLKTSEKWFRMGFRTLSKIRSDKSLTFTRMQRAGFHYYEDLVSCVTRAEAEAVSVLVKEAVWAFLPDAFVTMTGGFRRGKKIGHDVDFLITSPGSTEEEEEQLLHKVMNLWEKKGLLLYCDLVESTFEKLKLPSRKVDALDHFQKCFLILKLHHQRVVDSQKSSQQDGKTWKAIRVDLVMCPYERRAFALLGWTGSRQFERDLRRYATHERRMMLDNHGLWDKTKRIFLKAESEEEIFAHLGLDYIEPSERNA.

The segment at 1 to 26 (MDPLQTAHAGPRKKRPRQTGASMAST) is disordered. Positions 11–17 (PRKKRPR) match the Nuclear localization signal motif. The 98-residue stretch at 27-124 (PQDVRFQDLV…KPVETTGKHQ (98 aa)) folds into the BRCT domain. Serine 134 is modified (phosphoserine). The interval 151–511 (SQYACQRRTT…DYIEPSERNA (361 aa)) is mediates interaction with DNTTIP2. The segment at 258 to 262 (VGLKT) is involved in DNA binding. A 2'-deoxyribonucleoside 5'-triphosphate contacts are provided by residues 333–338 (GFRRGK) and 342–345 (HDVD). Positions 343, 345, and 435 each coordinate Mg(2+). 450–451 (GW) is a binding site for a 2'-deoxyribonucleoside 5'-triphosphate.

Belongs to the DNA polymerase type-X family. In terms of assembly, interacts with PRP19 and DNTTIP1. Forms a ternary complex with DNTTIP2 and core histone. Released from this complex by PCNA. Interacts with TRERF1. It depends on Mg(2+) as a cofactor.

The protein resides in the nucleus. It carries out the reaction DNA(n) + a 2'-deoxyribonucleoside 5'-triphosphate = DNA(n+1) + diphosphate. Template-independent DNA polymerase which catalyzes the random addition of deoxynucleoside 5'-triphosphate to the 3'-end of a DNA initiator. One of the in vivo functions of this enzyme is the addition of nucleotides at the junction (N region) of rearranged Ig heavy chain and T-cell receptor gene segments during the maturation of B- and T-cells. This chain is DNA nucleotidylexotransferase (DNTT), found in Eulemur macaco (Black lemur).